We begin with the raw amino-acid sequence, 57 residues long: MIYESIKNINFFTNKNNYNHIFNKSNYYFFNSNNTVASNEINQKTIRVVFSRPCWGV.

This is an uncharacterized protein from Dictyostelium discoideum (Social amoeba).